A 579-amino-acid chain; its full sequence is Protein O-linked-mannose beta-1,4-N-acetylglucosaminyltransferase 2 (579 aa).

The Cytoplasmic portion of the chain corresponds to Met-1–Gly-4. A helical; Signal-anchor for type II membrane protein transmembrane segment spans residues Thr-5–Leu-25. Residues Ser-26–Thr-579 lie on the Lumenal side of the membrane. N-linked (GlcNAc...) asparagine glycosylation is found at Asn-98, Asn-275, and Asn-542. The Fibronectin type-III domain occupies His-480–Thr-579.

It belongs to the glycosyltransferase 61 family.

It localises to the endoplasmic reticulum membrane. It catalyses the reaction 3-O-(alpha-D-mannosyl)-L-threonyl-[protein] + UDP-N-acetyl-alpha-D-glucosamine = 3-O-(N-acetyl-beta-D-glucosaminyl-(1-&gt;4)-alpha-D-mannosyl)-L-threonyl-[protein] + UDP + H(+). It functions in the pathway protein modification; protein glycosylation. In terms of biological role, O-linked mannose beta-1,4-N-acetylglucosaminyltransferase that transfers UDP-N-acetyl-D-glucosamine to the 4-position of the mannose to generate N-acetyl-D-glucosamine-beta-1,4-O-D-mannosylprotein. Involved in the biosynthesis of the phosphorylated O-mannosyl trisaccharide (N-acetylgalactosamine-beta-3-N-acetylglucosamine-beta-4-(phosphate-6-)mannose), a carbohydrate structure present in alpha-dystroglycan (DAG1), which is required for binding laminin G-like domain-containing extracellular proteins with high affinity. In Tetraodon nigroviridis (Spotted green pufferfish), this protein is Protein O-linked-mannose beta-1,4-N-acetylglucosaminyltransferase 2 (pomgnt2).